The sequence spans 525 residues: Peptide chain release factor 3 (525 aa).

A tr-type G domain is found at 8–276 (AMRRTFAIIS…AFVKEAPPPQ (269 aa)). GTP is bound by residues 17 to 24 (SHPDAGKT), 85 to 89 (DTPGH), and 139 to 142 (NKMD).

The protein belongs to the TRAFAC class translation factor GTPase superfamily. Classic translation factor GTPase family. PrfC subfamily.

It localises to the cytoplasm. Functionally, increases the formation of ribosomal termination complexes and stimulates activities of RF-1 and RF-2. It binds guanine nucleotides and has strong preference for UGA stop codons. It may interact directly with the ribosome. The stimulation of RF-1 and RF-2 is significantly reduced by GTP and GDP, but not by GMP. In Coxiella burnetii (strain CbuK_Q154) (Coxiella burnetii (strain Q154)), this protein is Peptide chain release factor 3.